We begin with the raw amino-acid sequence, 1296 residues long: Probable serine/threonine protein kinase IREH1 (1296 aa).

Disordered stretches follow at residues 1–274, 457–480, and 524–553; these read MVFK…SESP, SGAG…QEQH, and SPAL…VGSR. The segment covering 10–32 has biased composition (low complexity); it reads SSKKSGSSSPDSSNSPRSVGSNS. Ser-32 bears the Phosphoserine mark. Composition is skewed to basic and acidic residues over residues 68-77, 101-112, and 178-208; these read DGLKKKDGSS, EVKKPPPPEVKE, and RKKE…RDSL. Positions 214-249 are enriched in low complexity; the sequence is PPRSLSPTLPPSGSRLQNVASSSGTGRSEMSSGRSG. The C2H2-type; atypical zinc-finger motif lies at 602 to 621; that stretch reads CRICEEEVPTTHVEDHSRVC. The tract at residues 724–750 is disordered; sequence FGPKSDQGMTTSSASSMTPRSPIPTPR. Residues 730-740 show a composition bias toward polar residues; the sequence is QGMTTSSASSM. Positions 882-1171 constitute a Protein kinase domain; that stretch reads FEIIKPISRG…AAEVKQHIFF (290 aa). Residues 888-896 and Lys-911 contribute to the ATP site; that span reads ISRGAFGRV. Asp-1005 functions as the Proton acceptor in the catalytic mechanism. Phosphoserine is present on Ser-1070. One can recognise an AGC-kinase C-terminal domain in the interval 1172–1277; sequence KDINWDTLAR…KNLSQLASIN (106 aa). Residues 1214-1245 are disordered; sequence PSGEVPDYSDADSMTNSSGCSSNHHEEGEAEE. Over residues 1225–1235 the composition is skewed to polar residues; the sequence is DSMTNSSGCSS. Positions 1236–1245 are enriched in basic and acidic residues; it reads NHHEEGEAEE.

It belongs to the protein kinase superfamily. AGC Ser/Thr protein kinase family.

The enzyme catalyses L-seryl-[protein] + ATP = O-phospho-L-seryl-[protein] + ADP + H(+). It carries out the reaction L-threonyl-[protein] + ATP = O-phospho-L-threonyl-[protein] + ADP + H(+). May be involved in root hair elongation. This is Probable serine/threonine protein kinase IREH1 from Arabidopsis thaliana (Mouse-ear cress).